The chain runs to 122 residues: Small ribosomal subunit protein uS13 (122 aa).

Positions 91 to 122 (RHRRGLPVHGQRTKTNARTRKGPKRTVAGKKK) are disordered.

This sequence belongs to the universal ribosomal protein uS13 family. Part of the 30S ribosomal subunit. Forms a loose heterodimer with protein S19. Forms two bridges to the 50S subunit in the 70S ribosome.

In terms of biological role, located at the top of the head of the 30S subunit, it contacts several helices of the 16S rRNA. In the 70S ribosome it contacts the 23S rRNA (bridge B1a) and protein L5 of the 50S subunit (bridge B1b), connecting the 2 subunits; these bridges are implicated in subunit movement. Contacts the tRNAs in the A and P-sites. This chain is Small ribosomal subunit protein uS13, found in Kocuria rhizophila (strain ATCC 9341 / DSM 348 / NBRC 103217 / DC2201).